Here is a 908-residue protein sequence, read N- to C-terminus: Protein translocase subunit SecA (908 aa).

ATP contacts are provided by residues Gln87, 105–109, and Asp507; that span reads GEGKT. The interval 860–898 is disordered; that stretch reads EALGNAEESDEASDQSVKTFERAGAKVGRNDPCPCGSGK. Residues Cys892, Cys894, Cys903, and His904 each coordinate Zn(2+).

It belongs to the SecA family. In terms of assembly, monomer and homodimer. Part of the essential Sec protein translocation apparatus which comprises SecA, SecYEG and auxiliary proteins SecDF-YajC and YidC. Zn(2+) serves as cofactor.

The protein resides in the cell inner membrane. It localises to the cytoplasm. The enzyme catalyses ATP + H2O + cellular proteinSide 1 = ADP + phosphate + cellular proteinSide 2.. Functionally, part of the Sec protein translocase complex. Interacts with the SecYEG preprotein conducting channel. Has a central role in coupling the hydrolysis of ATP to the transfer of proteins into and across the cell membrane, serving both as a receptor for the preprotein-SecB complex and as an ATP-driven molecular motor driving the stepwise translocation of polypeptide chains across the membrane. This is Protein translocase subunit SecA from Methylobacillus flagellatus (strain ATCC 51484 / DSM 6875 / VKM B-1610 / KT).